Here is a 484-residue protein sequence, read N- to C-terminus: Protein nucleotidyltransferase YdiU (484 aa).

G87, G89, R90, K110, D122, G123, R173, and R180 together coordinate ATP. D249 acts as the Proton acceptor in catalysis. Mg(2+) is bound by residues N250 and D259. D259 contributes to the ATP binding site.

The protein belongs to the SELO family. The cofactor is Mg(2+). Mn(2+) serves as cofactor.

It carries out the reaction L-seryl-[protein] + ATP = 3-O-(5'-adenylyl)-L-seryl-[protein] + diphosphate. The enzyme catalyses L-threonyl-[protein] + ATP = 3-O-(5'-adenylyl)-L-threonyl-[protein] + diphosphate. The catalysed reaction is L-tyrosyl-[protein] + ATP = O-(5'-adenylyl)-L-tyrosyl-[protein] + diphosphate. It catalyses the reaction L-histidyl-[protein] + UTP = N(tele)-(5'-uridylyl)-L-histidyl-[protein] + diphosphate. It carries out the reaction L-seryl-[protein] + UTP = O-(5'-uridylyl)-L-seryl-[protein] + diphosphate. The enzyme catalyses L-tyrosyl-[protein] + UTP = O-(5'-uridylyl)-L-tyrosyl-[protein] + diphosphate. Nucleotidyltransferase involved in the post-translational modification of proteins. It can catalyze the addition of adenosine monophosphate (AMP) or uridine monophosphate (UMP) to a protein, resulting in modifications known as AMPylation and UMPylation. The protein is Protein nucleotidyltransferase YdiU of Alcanivorax borkumensis (strain ATCC 700651 / DSM 11573 / NCIMB 13689 / SK2).